A 369-amino-acid chain; its full sequence is MNEVKHDIKALSLEALMALINSYGQPAFRAKQIFHWIYAHGVTDFAQMKNLSASFQTLLSQHFTVSSIQPHADTVSHEITPEQTVKFLFRLSDEQSIESVFIPSDSTSRNTLCISSQVGCAFACKFCATGYMGFIRNLTIGEILDQVLWVNRWLGDQRGGKITNVVFMGMGEPLANFDNCLAAIRILTNPDYAFQISTRKITVSTVGFIPGIQRLIDTGINCKLAISLHSAHQAIREELIPIAKEYSLATLKAILTRYNQAYKQPITFEYSLIHKINDSEQDAILLSKFCKGINCKINLIDYNSVDNIDYLPSPEGHKQAFIRKCIEHGLTVTVRKSRGADIQAACGQLAIQHVHGKKFSKIQTSRHST.

The active-site Proton acceptor is Glu-98. A Radical SAM core domain is found at 106–341 (STSRNTLCIS…VTVRKSRGAD (236 aa)). Cys-113 and Cys-346 form a disulfide bridge. 3 residues coordinate [4Fe-4S] cluster: Cys-120, Cys-124, and Cys-127. S-adenosyl-L-methionine-binding positions include 171–172 (GE), Ser-204, 227–229 (SLH), and Asn-303. Residue Cys-346 is the S-methylcysteine intermediate of the active site.

This sequence belongs to the radical SAM superfamily. RlmN family. The cofactor is [4Fe-4S] cluster.

Its subcellular location is the cytoplasm. It carries out the reaction adenosine(2503) in 23S rRNA + 2 reduced [2Fe-2S]-[ferredoxin] + 2 S-adenosyl-L-methionine = 2-methyladenosine(2503) in 23S rRNA + 5'-deoxyadenosine + L-methionine + 2 oxidized [2Fe-2S]-[ferredoxin] + S-adenosyl-L-homocysteine. The catalysed reaction is adenosine(37) in tRNA + 2 reduced [2Fe-2S]-[ferredoxin] + 2 S-adenosyl-L-methionine = 2-methyladenosine(37) in tRNA + 5'-deoxyadenosine + L-methionine + 2 oxidized [2Fe-2S]-[ferredoxin] + S-adenosyl-L-homocysteine. Specifically methylates position 2 of adenine 2503 in 23S rRNA and position 2 of adenine 37 in tRNAs. This is Probable dual-specificity RNA methyltransferase RlmN from Chloroherpeton thalassium (strain ATCC 35110 / GB-78).